The following is a 197-amino-acid chain: Large ribosomal subunit protein bL25 (197 aa).

It belongs to the bacterial ribosomal protein bL25 family. CTC subfamily. As to quaternary structure, part of the 50S ribosomal subunit; part of the 5S rRNA/L5/L18/L25 subcomplex. Contacts the 5S rRNA. Binds to the 5S rRNA independently of L5 and L18.

Its function is as follows. This is one of the proteins that binds to the 5S RNA in the ribosome where it forms part of the central protuberance. The protein is Large ribosomal subunit protein bL25 of Streptomyces avermitilis (strain ATCC 31267 / DSM 46492 / JCM 5070 / NBRC 14893 / NCIMB 12804 / NRRL 8165 / MA-4680).